A 265-amino-acid chain; its full sequence is 5'-nucleotidase SurE (265 aa).

The a divalent metal cation site is built by aspartate 11, aspartate 12, serine 43, and asparagine 101.

Belongs to the SurE nucleotidase family. The cofactor is a divalent metal cation.

The protein localises to the cytoplasm. The catalysed reaction is a ribonucleoside 5'-phosphate + H2O = a ribonucleoside + phosphate. Nucleotidase that shows phosphatase activity on nucleoside 5'-monophosphates. The protein is 5'-nucleotidase SurE of Synechococcus sp. (strain CC9311).